Here is a 185-residue protein sequence, read N- to C-terminus: Pro-adrenomedullin (185 aa).

The N-terminal stretch at methionine 1–threonine 21 is a signal peptide. Arginine 41 carries the post-translational modification Arginine amide. Positions glutamate 45 to valine 92 are excised as a propeptide. Positions lysine 60 to alanine 87 are disordered. An intrachain disulfide couples cysteine 110 to cysteine 115. The segment at aspartate 133–leucine 185 is disordered. Tyrosine 146 carries the tyrosine amide modification. Residues arginine 148 to leucine 185 constitute a propeptide, preproAM C-terminal fragment.

Belongs to the adrenomedullin family. As to expression, highest levels found in pheochromocytoma and adrenal medulla. Also found in lung, ventricle and kidney tissues.

It is found in the secreted. Its function is as follows. Adrenomedullin/ADM and proadrenomedullin N-20 terminal peptide/PAMP are peptide hormones that act as potent hypotensive and vasodilatator agents. Numerous actions have been reported most related to the physiologic control of fluid and electrolyte homeostasis. In the kidney, ADM is diuretic and natriuretic, and both ADM and PAMP inhibit aldosterone secretion by direct adrenal actions. In pituitary gland, both peptides at physiologically relevant doses inhibit basal ACTH secretion. Both peptides appear to act in brain and pituitary gland to facilitate the loss of plasma volume, actions which complement their hypotensive effects in blood vessels. Functionally, ADM function is mediated by the CALCRL-RAMP2 and CALCRL-RAMP3 receptor complexes with ADM showing the highest potency for the CALCRL-RAMP2 complex. This Homo sapiens (Human) protein is Pro-adrenomedullin.